The sequence spans 243 residues: Ubiquinone/menaquinone biosynthesis C-methyltransferase UbiE (243 aa).

Residues Thr-69, Asp-90, and 116-117 each bind S-adenosyl-L-methionine; that span reads DA.

It belongs to the class I-like SAM-binding methyltransferase superfamily. MenG/UbiE family.

It catalyses the reaction a 2-demethylmenaquinol + S-adenosyl-L-methionine = a menaquinol + S-adenosyl-L-homocysteine + H(+). It carries out the reaction a 2-methoxy-6-(all-trans-polyprenyl)benzene-1,4-diol + S-adenosyl-L-methionine = a 5-methoxy-2-methyl-3-(all-trans-polyprenyl)benzene-1,4-diol + S-adenosyl-L-homocysteine + H(+). The protein operates within quinol/quinone metabolism; menaquinone biosynthesis; menaquinol from 1,4-dihydroxy-2-naphthoate: step 2/2. Its pathway is cofactor biosynthesis; ubiquinone biosynthesis. In terms of biological role, methyltransferase required for the conversion of demethylmenaquinol (DMKH2) to menaquinol (MKH2) and the conversion of 2-polyprenyl-6-methoxy-1,4-benzoquinol (DDMQH2) to 2-polyprenyl-3-methyl-6-methoxy-1,4-benzoquinol (DMQH2). In Paraburkholderia xenovorans (strain LB400), this protein is Ubiquinone/menaquinone biosynthesis C-methyltransferase UbiE.